A 471-amino-acid polypeptide reads, in one-letter code: U1 small nuclear ribonucleoprotein 70 kDa (471 aa).

The interval Phe-48 to Arg-78 is disordered. Positions Ala-60–Arg-78 are enriched in basic and acidic residues. The interval His-92–Gly-205 is required for interaction with U1 RNA. In terms of domain architecture, RRM spans Lys-103 to Gly-184. A disordered region spans residues Trp-190–Glu-471. Residues Leu-195–Arg-204 show a composition bias toward gly residues. The segment covering Asn-210–Glu-246 has biased composition (basic and acidic residues). The segment covering Arg-247–Ser-261 has biased composition (basic residues). The span at Arg-262 to Arg-288 shows a compositional bias: basic and acidic residues. A compositionally biased stretch (basic residues) spans Asp-289 to Glu-298. The segment covering Arg-299–Ala-316 has biased composition (basic and acidic residues). The segment covering Glu-317–Gln-326 has biased composition (acidic residues). The span at Ile-339–Pro-428 shows a compositional bias: basic and acidic residues.

As to quaternary structure, component of the U1 snRNP. The U1 snRNP is composed of the U1 snRNA and the 7 core Sm proteins snrpb, snrpd1, snrpd2, snrpd3, snrpe, snrpf and snrpg that assemble in a heptameric protein ring on the Sm site of the small nuclear RNA to form the core snRNP, and at least three U1 snRNP-specific proteins snrnp70/U1-70K, snrpa/U1-A and snrpc/U1-C.

It localises to the nucleus speckle. The protein resides in the nucleus. The protein localises to the nucleoplasm. Component of the spliceosomal U1 snRNP, which is essential for recognition of the pre-mRNA 5' splice-site and the subsequent assembly of the spliceosome. snrnp70 binds to the loop I region of U1-snRNA. The sequence is that of U1 small nuclear ribonucleoprotein 70 kDa (snrnp70) from Xenopus laevis (African clawed frog).